The sequence spans 226 residues: Putative integrase V10 (226 aa).

Residues R97, H174, and R177 contribute to the active site. Y210 serves as the catalytic O-(3'-phospho-DNA)-tyrosine intermediate.

The protein belongs to the 'phage' integrase family.

May catalyze site-specific integration of viral genome into host or helper virus DNA. The protein is Putative integrase V10 of Acanthamoeba polyphaga (Amoeba).